Reading from the N-terminus, the 298-residue chain is HTH-type transcriptional regulator CzcR (298 aa).

One can recognise an HTH lysR-type domain in the interval 11 to 68 (MELRDLQIFQSVADQGSVSSAAKELNYVQSNVTARIKQLENELKTPLFYRHKRGMTLT). The segment at residues 28 to 47 (VSSAAKELNYVQSNVTARIK) is a DNA-binding region (H-T-H motif).

Belongs to the LysR transcriptional regulatory family.

The protein is HTH-type transcriptional regulator CzcR (czcR) of Bacillus thuringiensis (strain Al Hakam).